Reading from the N-terminus, the 392-residue chain is Multidrug resistance protein MdtL (392 aa).

12 helical membrane passes run 4–24 (FLLC…MYLV), 38–58 (AQLH…MLFA), 70–90 (VAIV…QAHA), 95–115 (LVGR…AFAI), 131–151 (LLNG…HLIM), 158–178 (SLFY…VFIL), 209–229 (ILIT…SPVL), 246–266 (ALMA…LSLF), 270–290 (TLML…SLAT), 294–314 (LTLI…GVAM), 331–351 (VLGI…AIIG), and 357–377 (MLIG…LVVT).

This sequence belongs to the major facilitator superfamily. DHA1 family. MdtL (TC 2.A.1.2.22) subfamily.

The protein resides in the cell inner membrane. This chain is Multidrug resistance protein MdtL, found in Klebsiella pneumoniae (strain 342).